A 1316-amino-acid polypeptide reads, in one-letter code: MDSQELKTLINYYCQERYFHHVLLVASEGIKRYGSDPVFRFYHAYGTLMEGKTQEALREFEAIKNKQDVSLCSLLALIYAHKMSPNPDREAILESDARVKEQRKGAGEKALYHAGLFLWHIGRHDKAREYIDRMIKISDGSKQGHVLKAWLDITRGKEPYTKKALKYFEEGLQDGNDTFALLGKAQCLEMRQNYSGALETVNQIIVNFPSFLPAFVKKMKLQLALQDWDQTVETAQRLLLQDSQNVEALRMQALYYVCREGDIEKASTKLENLGNTLDAMEPQNAQLFYNITLAFSRTCGRSQLILQKIQTLLERAFSLNPQQSEFATELGYQMILQGRVKEALKWYKTAMTLDETSVSALVGFIQCQLIEGQLQDADQQLEFLNEIQQSIGKSAELIYLHAVLAMKKNKRQEEVINLLNDVLDTHFSQLEGLPLGIQYFEKLNPDFLLEIVMEYLSFCPMQPASPGQPLCPLLRRCISVLETVVRTVPGLLQTVFLIAKVKYLSGDIEAAFNNLQHCLEHNPSYADAHLLLAQVYLSQEKVKLCSQSLELCLSYDFKVRDYPLYHLIKAQSQKKMGEIADAIKTLHMAMSLPGMKRIGASTKSKDRKTEVDTSHRLSIFLELIDVHRLNGEQHEATKVLQDAIHEFSGTSEEVRVTIANADLALAQGDIERALSILQNVTAEQPYFIEAREKMADIYLKHRKDKMLYITCFREIAERMANPRSFLLLGDAYMNILEPEEAIVAYEQALNQNPKDGTLASKMGKALIKTHNYSMAITYYEAALKTGQKNYLCYDLAELLLKLKWYDKAEKVLQHALAHEPVNELSALMEDGRCQVLLAKVYSKMEKLGDAITALQQARELQARVLKRVQMEQPDAVPAQKHLAAEICAEIAKHSVAQRDYEKAIKFYREALVHCETDNKIMLELARLYLAQDDPDSCLRQCALLLQSDQDNEAATMMMADLMFRKQDYEQAVFHLQQLLERKPDNYMTLSRLIDLLRRCGKLEDVPRFFSMAEKRNSRAKLEPGFQYCKGLYLWYTGEPNDALRHFNKARKDRDWGQNALYNMIEICLNPDNETVGGEVFENLDGDLGNSTEKQESVQLAVRTAEKLLKELKPQTVQGHVQLRIMENYCLMATKQKSNVEQALNTFTEIAASEKEHIPALLGMATAYMILKQTPRARNQLKRIAKMNWNAIDAEEFEKSWLLLADIYIQSAKYDMAEDLLKRCLRHNRSCCKAYEYMGYIMEKEQAYTDAALNYEMAWKYSNRTNPAVGYKLAFNYLKAKRYVDSIDICHQVLEAHPTYPKIRKDILDKARASLRP.

TPR repeat units lie at residues E108–S141, H145–T178, A180–F211, A285–Q323, S324–S357, L492–Y525, P563–K596, L617–T650, P722–D755, T757–N789, L791–N822, G831–V864, A884–D917, K919–N951, E952–N985, P1023–G1056, E1197–C1230, K1232–T1264, and P1266–Y1299.

It belongs to the TTC21 family. In terms of assembly, component of the IFT complex A (IFT-A) complex. IFT-A complex is divided into a core subcomplex composed of IFT122:IFT140:WDR19 which is associated with TULP3 and a peripheral subcomplex composed of IFT43:WDR35:TTC21B. Interacts directy with WDR35 and TTC21B. Interacts with TTC25.

The protein resides in the cytoplasm. It localises to the cytoskeleton. The protein localises to the cilium axoneme. In terms of biological role, component of the IFT complex A (IFT-A), a complex required for retrograde ciliary transport and entry into cilia of G protein-coupled receptors (GPCRs). Essential for retrograde trafficking of IFT-1, IFT-B and GPCRs. Negatively modulates the SHH signal transduction. This chain is Tetratricopeptide repeat protein 21B, found in Homo sapiens (Human).